Here is a 291-residue protein sequence, read N- to C-terminus: Pyridoxal 5'-phosphate synthase subunit PdxS (291 aa).

D-ribose 5-phosphate is bound at residue aspartate 23. Residue lysine 80 is the Schiff-base intermediate with D-ribose 5-phosphate of the active site. Glycine 152 serves as a coordination point for D-ribose 5-phosphate. Arginine 164 contacts D-glyceraldehyde 3-phosphate. D-ribose 5-phosphate is bound by residues glycine 213 and 234–235 (GS).

It belongs to the PdxS/SNZ family. In the presence of PdxT, forms a dodecamer of heterodimers.

The catalysed reaction is aldehydo-D-ribose 5-phosphate + D-glyceraldehyde 3-phosphate + L-glutamine = pyridoxal 5'-phosphate + L-glutamate + phosphate + 3 H2O + H(+). Its pathway is cofactor biosynthesis; pyridoxal 5'-phosphate biosynthesis. Functionally, catalyzes the formation of pyridoxal 5'-phosphate from ribose 5-phosphate (RBP), glyceraldehyde 3-phosphate (G3P) and ammonia. The ammonia is provided by the PdxT subunit. Can also use ribulose 5-phosphate and dihydroxyacetone phosphate as substrates, resulting from enzyme-catalyzed isomerization of RBP and G3P, respectively. The chain is Pyridoxal 5'-phosphate synthase subunit PdxS from Bifidobacterium adolescentis (strain ATCC 15703 / DSM 20083 / NCTC 11814 / E194a).